The following is a 631-amino-acid chain: 30-kDa cleavage and polyadenylation specificity factor 30 (631 aa).

The segment at 12-38 (EGGLDSGPVQNTASVPVAPPENSSSAA) is disordered. C3H1-type zinc fingers lie at residues 60-87 (SFRQ…HQFD), 88-112 (KARM…VYKH), and 114-141 (NEDI…HAKL). Residues 179 to 234 (QDRPQGQVPMQGQPQESGNLQQQQQQQPQQSQHQVSQTLIPNPADQTNRTSHPLPQ) form a disordered region. Residues 182 to 215 (PQGQVPMQGQPQESGNLQQQQQQQPQQSQHQVSQ) show a composition bias toward low complexity. Polar residues predominate over residues 216 to 231 (TLIPNPADQTNRTSHP). One can recognise a YTH domain in the interval 237–372 (NRYFVVKSNN…SVGEQLASLL (136 aa)). Over residues 392–407 (EEEKAKGVNPESRAEN) the composition is skewed to basic and acidic residues. Disordered regions lie at residues 392 to 447 (EEEK…RGIM) and 541 to 631 (PHMG…KKRR). Over residues 412 to 432 (PFEDNEEEEEEEDESEEEEES) the composition is skewed to acidic residues. Residues 573-583 (KTPERSDERGV) show a composition bias toward basic and acidic residues. Residues S610 and S612 each carry the phosphoserine modification. Basic residues predominate over residues 621–631 (RSRHGEGKKRR).

The protein belongs to the CPSF4/YTH1 family. In terms of assembly, component of the cleavage and polyadenylation specificity factor (CPSF) complex. Can form homodimers. Binds to calmodulin. Forms a complex with cleavage and polyadenylation specificity factor (CPSF) subunits CPSF73-I, CPSF73-II, CPSF100, CPSF160, CFIS2, FIPS3, FIPS5, PAPS2, PAPS3, CLPS3, PCFS1, PCFS4, CSTF50 and CSTF77. In terms of tissue distribution, expressed in seedlings, roots, leaves, siliques, stems and flowers.

It is found in the nucleus. It localises to the cytoplasm. With respect to regulation, endonuclease activity is repressed by the N-terminal domain of FIPS5. Nuclease activity is inhibited by zinc (&gt;100 uM), cadmium in a progressive manner (50 percent activity at 1 mM Cd(2+)), and high salt levels (e.g. KCl or NaCl &gt;600 mM). Stimulated by ATP in the presence of Zn(2+), even at inhibitory zinc concentrations. Elevated temperatures prevent RNA-binding at 55 degrees Celsius, but endonuclease activity at 70 degrees Celsius. The sulfhydryl reagent dithiothreitol (DTT) inhibits both RNA-binding and nuclease activities. Component of the cleavage and polyadenylation specificity factor (CPSF) complex that play a key role in pre-mRNA 3'-end formation. May interact with poly(A) polymerase and other factors to bring about cleavage and poly(A) addition. Mediates poly(A) site selection. Binds RNA in a calcium-dependent manner. Exhibits endonuclease activity with an ability to nick and degrade linear as well as circular single-stranded RNA that leaves RNA 3' ends with hydroxyl groups, thus mediating processing of the pre-mRNA as a prelude to the polyadenylation. Involved in the post-transcriptional control, probably via poly(A) addition, of the responses of plants to stress, especially genes mediating tolerance to oxidative stress. Plays a role in the regulation of salicylic acid (SA) production via the control of messenger RNA 3' end processing, thus being a key component of programmed cell death and plant immune responses required for resistance to virulent Pseudomonas syringae pv tomato DC3000 (Pst). This chain is 30-kDa cleavage and polyadenylation specificity factor 30, found in Arabidopsis thaliana (Mouse-ear cress).